A 310-amino-acid chain; its full sequence is Antiviral protein II/III (310 aa).

An N-terminal signal peptide occupies residues 1–25; it reads MKMKVLEVVGLAISIWLMLTPPASS. 2 disulfide bridges follow: cysteine 57/cysteine 284 and cysteine 106/cysteine 123. Tyrosine 94 is a catalytic residue. Residues tyrosine 142, glutamate 197, and arginine 200 contribute to the active site.

This sequence belongs to the ribosome-inactivating protein family. Type 1 RIP subfamily. In terms of tissue distribution, PAP-II is expressed in early summer leaves (at protein level). PAP-III is expressed in late summer leaves (at protein level).

It catalyses the reaction Endohydrolysis of the N-glycosidic bond at one specific adenosine on the 28S rRNA.. Possesses antiviral potency. Inhibits viral infection of plants (tobacco mosaic virus). Inhibits protein synthesis in both prokaryotes and eukaryotes. This is Antiviral protein II/III (PAP2) from Phytolacca americana (American pokeweed).